Reading from the N-terminus, the 198-residue chain is Inner membrane-spanning protein YciB (198 aa).

5 helical membrane-spanning segments follow: residues I36–I56, L67–F87, W90–G110, V135–F155, and F162–L182.

This sequence belongs to the YciB family.

Its subcellular location is the cell inner membrane. Its function is as follows. Plays a role in cell envelope biogenesis, maintenance of cell envelope integrity and membrane homeostasis. This chain is Inner membrane-spanning protein YciB, found in Pseudomonas fluorescens (strain SBW25).